Reading from the N-terminus, the 179-residue chain is Large ribosomal subunit protein uL6 (179 aa).

The protein belongs to the universal ribosomal protein uL6 family. Part of the 50S ribosomal subunit.

Functionally, this protein binds to the 23S rRNA, and is important in its secondary structure. It is located near the subunit interface in the base of the L7/L12 stalk, and near the tRNA binding site of the peptidyltransferase center. The polypeptide is Large ribosomal subunit protein uL6 (Trichlorobacter lovleyi (strain ATCC BAA-1151 / DSM 17278 / SZ) (Geobacter lovleyi)).